Consider the following 314-residue polypeptide: Homoserine O-acetyltransferase (314 aa).

Catalysis depends on C142, which acts as the Acyl-thioester intermediate. 2 residues coordinate substrate: K163 and S192. H235 serves as the catalytic Proton acceptor. The active site involves E237. R249 is a substrate binding site.

Belongs to the MetA family.

Its subcellular location is the cytoplasm. It catalyses the reaction L-homoserine + acetyl-CoA = O-acetyl-L-homoserine + CoA. It functions in the pathway amino-acid biosynthesis; L-methionine biosynthesis via de novo pathway; O-acetyl-L-homoserine from L-homoserine: step 1/1. In terms of biological role, transfers an acetyl group from acetyl-CoA to L-homoserine, forming acetyl-L-homoserine. This Streptococcus pneumoniae (strain JJA) protein is Homoserine O-acetyltransferase.